Reading from the N-terminus, the 635-residue chain is Moesin/ezrin/radixin homolog 2 (635 aa).

An FERM domain is found at Leu12–Arg305.

As to quaternary structure, interacts with Moe and arm at the adherens junction. Forms a complex with Kibra and Ex. Interacts (via FERM domain) with Sav (via FBM motif). Interacts with Schip1. As to expression, expressed predominantly in the germline. Expressed in the developing oocyte from stage 6 to the end of oogenesis and in the apical ends of follical cells from stage 10. Ubiquitous expression throughout embryogenesis with enhanced expression in mesoderm of early embryos and midgut of late embryos. In embryonic CNS, expression is seen in neuropil and developing brain and is enhanced in neuronal cell bodies. In embryonic PNS, expression is seen within the cell body. In third instar larvae, expression is uniform in the eye imaginal disk and is enhanced at the morphogenetic furrow. In pupal eyes, expression is seen in the cytoplasm of secondary and tertiary pigment cells, bristle precursor cells and rhabdomeres.

It is found in the cell junction. The protein resides in the adherens junction. It localises to the cell membrane. Its subcellular location is the cytoplasm. The protein localises to the cytoskeleton. It is found in the apical cell membrane. The protein resides in the cell projection. It localises to the rhabdomere. Functionally, regulator of the Hippo/SWH (Sav/Wts/Hpo) signaling pathway, a signaling pathway that plays a pivotal role in organ size control and tumor suppression by restricting proliferation and promoting apoptosis. The core of this pathway is composed of a kinase cascade wherein Hippo (Hpo), in complex with its regulatory protein Salvador (Sav), phosphorylates and activates Warts (Wts) in complex with its regulatory protein Mats, which in turn phosphorylates and inactivates the Yorkie (Yki) oncoprotein. Mer acts synergistically along with Ex and Kibra to regulate the Hippo signaling pathway. This chain is Moesin/ezrin/radixin homolog 2 (Mer), found in Drosophila melanogaster (Fruit fly).